The following is a 388-amino-acid chain: Dual-specificity RNA methyltransferase RlmN (388 aa).

Glu-109 acts as the Proton acceptor in catalysis. A Radical SAM core domain is found at 115-354 (EDDRATLCVS…TIVRKTRGDD (240 aa)). Cysteines 122 and 359 form a disulfide. [4Fe-4S] cluster contacts are provided by Cys-129, Cys-133, and Cys-136. S-adenosyl-L-methionine contacts are provided by residues 183–184 (GE), Ser-215, 237–239 (SLH), and Asn-316. The active-site S-methylcysteine intermediate is the Cys-359.

It belongs to the radical SAM superfamily. RlmN family. The cofactor is [4Fe-4S] cluster.

Its subcellular location is the cytoplasm. The enzyme catalyses adenosine(2503) in 23S rRNA + 2 reduced [2Fe-2S]-[ferredoxin] + 2 S-adenosyl-L-methionine = 2-methyladenosine(2503) in 23S rRNA + 5'-deoxyadenosine + L-methionine + 2 oxidized [2Fe-2S]-[ferredoxin] + S-adenosyl-L-homocysteine. It catalyses the reaction adenosine(37) in tRNA + 2 reduced [2Fe-2S]-[ferredoxin] + 2 S-adenosyl-L-methionine = 2-methyladenosine(37) in tRNA + 5'-deoxyadenosine + L-methionine + 2 oxidized [2Fe-2S]-[ferredoxin] + S-adenosyl-L-homocysteine. Functionally, specifically methylates position 2 of adenine 2503 in 23S rRNA and position 2 of adenine 37 in tRNAs. m2A2503 modification seems to play a crucial role in the proofreading step occurring at the peptidyl transferase center and thus would serve to optimize ribosomal fidelity. The sequence is that of Dual-specificity RNA methyltransferase RlmN from Salmonella typhi.